The sequence spans 1259 residues: Neural cell adhesion molecule L1 (1259 aa).

Positions 1 to 19 (MVMMLWYVLPLLLCSPCLL) are cleaved as a signal peptide. Topologically, residues 20-1122 (IQIPDEYKGH…VSTTGSFASE (1103 aa)) are extracellular. 6 consecutive Ig-like C2-type domains span residues 35–128 (PVIT…HEIQ), 138–225 (PKET…EPID), 239–327 (PRLL…YYVT), 332–419 (PYWL…AYIY), 424–506 (PARI…NNVT), and 517–600 (TQIT…DEVE). 2 cysteine pairs are disulfide-bonded: cysteine 57–cysteine 113 and cysteine 157–cysteine 208. 4 N-linked (GlcNAc...) asparagine glycosylation sites follow: asparagine 100, asparagine 202, asparagine 246, and asparagine 293. Intrachain disulfides connect cysteine 263–cysteine 311 and cysteine 353–cysteine 403. 3 N-linked (GlcNAc...) asparagine glycosylation sites follow: asparagine 432, asparagine 489, and asparagine 504. The cysteines at positions 447 and 496 are disulfide-linked. A disulfide bond links cysteine 538 and cysteine 590. Short sequence motifs (cell attachment site) lie at residues 553–555 (RGD) and 562–564 (RGD). 5 Fibronectin type-III domains span residues 613-711 (PVPH…TPEA), 716-809 (NPVD…SGED), 811-916 (PQVS…PEGV), 919-1014 (HPEA…MALF), and 1016-1116 (KPDF…VSTT). A glycan (N-linked (GlcNAc...) asparagine) is linked at asparagine 670. A disordered region spans residues 697 to 724 (GEPSPVSETVVTPEAAPEKNPVDVRGEG). A compositionally biased stretch (basic and acidic residues) spans 712 to 724 (APEKNPVDVRGEG). N-linked (GlcNAc...) asparagine glycans are attached at residues asparagine 725, asparagine 776, asparagine 824, asparagine 848, asparagine 875, asparagine 968, asparagine 978, asparagine 1021, asparagine 1029, asparagine 1072, and asparagine 1106. Residues 1123–1145 (GWFIAFVSAIILLLLILLILCFI) form a helical membrane-spanning segment. The Cytoplasmic segment spans residues 1146–1259 (KRSKGGKYSV…SPINPAVALE (114 aa)). Phosphoserine occurs at positions 1165, 1179, 1180, 1183, 1196, 1245, 1246, and 1250. 2 disordered regions span residues 1182–1209 (ESDN…SDDS) and 1228–1259 (IGQY…VALE). Polar residues predominate over residues 1243-1252 (NDSSGATSPI).

Belongs to the immunoglobulin superfamily. L1/neurofascin/NgCAM family. In terms of assembly, interacts with SHTN1; the interaction occurs in axonal growth cones. Interacts with isoform 2 of BSG. Isoform 2 is predominantly found in the brain, while isoform 1 is found in the peripheral nervous system.

Its subcellular location is the cell membrane. It localises to the cell projection. The protein localises to the growth cone. Functionally, neural cell adhesion molecule involved in the dynamics of cell adhesion and in the generation of transmembrane signals at tyrosine kinase receptors. During brain development, critical in multiple processes, including neuronal migration, axonal growth and fasciculation, and synaptogenesis. In the mature brain, plays a role in the dynamics of neuronal structure and function, including synaptic plasticity. The protein is Neural cell adhesion molecule L1 (L1cam) of Rattus norvegicus (Rat).